The chain runs to 274 residues: Putative deoxyribonuclease TATDN1 homolog (274 aa).

A divalent metal cation-binding residues include Glu-105, His-139, His-162, and Asp-208.

Belongs to the metallo-dependent hydrolases superfamily. TatD-type hydrolase family. A divalent metal cation is required as a cofactor.

It is found in the nucleus. In terms of biological role, putative deoxyribonuclease. This chain is Putative deoxyribonuclease TATDN1 homolog, found in Enterocytozoon bieneusi (strain H348) (Microsporidian parasite).